The following is a 307-amino-acid chain: Protease HtpX homolog 1 (307 aa).

The next 2 membrane-spanning stretches (helical) occupy residues 7–27 (LKTLMFLSGTLTIIAEGIITY) and 38–60 (IFTAIFLVILWLIQWLIAPYLVG). Position 133 (His133) interacts with Zn(2+). Residue Glu134 is part of the active site. Zn(2+) is bound at residue His137. 2 consecutive transmembrane segments (helical) span residues 145–165 (IGMALGLIPTIIGYVGNFLLF) and 180–200 (LILGLAMLAIGGVLFVLTFLL). A Zn(2+)-binding site is contributed by Glu212.

The protein belongs to the peptidase M48B family. Requires Zn(2+) as cofactor.

The protein resides in the cell membrane. The protein is Protease HtpX homolog 1 of Sulfolobus acidocaldarius (strain ATCC 33909 / DSM 639 / JCM 8929 / NBRC 15157 / NCIMB 11770).